Here is a 452-residue protein sequence, read N- to C-terminus: MQSEMAIDTVATAEKSPLELLQQTKASVEAIIAKMLSIKQQGTPKSENRELLTQMFLNFINLRQANRSILIEEEKVRTETEIAKSPVDFTTLELHNLMYEKSHYLKANKASRDFKSRYPNIDLISEQDFFSDAPEAIKSQTLSNDSSHDLMLKRLNFELHQRKELCKLRVRLEQQKKSLLESNAERNKFLSSLPVHLKSLKKASLPVQSQLSLQNQKKLKYHNLAELLPPPLYVIYSQFMALKEAFEENIDVEVSGSLKDAQTYARQQAEQNSESLRLEVGVDEERQRKRLKKVGSDEGGVYQVHPLKVVLHVYDDEITDPKSHELVMLKFEYLLKLNVVCVGIEESEDGLEKNILCNLFPDDSGLEPPHQSAKLILGNDHVFDKSRTSRPYKWAQHLAGIETLPEMSPFFTDKDIQYSDTAKGYASASDHRNVQTVLQRIRSQKKTKLTLV.

This sequence belongs to the THOC5 family. As to quaternary structure, component of the THO complex, which is composed of THO1, THO2, THO3, THO5, THO6 and THO7.

It is found in the nucleus. In terms of biological role, acts as a component of the THO subcomplex of the TREX complex which is thought to couple mRNA transcription, processing and nuclear export. This is THO complex subunit 5A (THO5A) from Arabidopsis thaliana (Mouse-ear cress).